Consider the following 134-residue polypeptide: Thionin-2.1 (134 aa).

Positions 1 to 24 (MKGRILILSLLIMSLVMAQVQVEA) are cleaved as a signal peptide. Cystine bridges form between cysteine 27-cysteine 61, cysteine 28-cysteine 55, and cysteine 40-cysteine 49. A propeptide spans 68-134 (AILENSADAT…VVPPGPPKLL (67 aa)) (acidic domain).

Belongs to the plant thionin (TC 1.C.44) family. As to expression, detected in rosette leaves and at a very high level in flowers and in siliques.

It is found in the secreted. Its function is as follows. Seems to function as a defense factor. Thionins are small plant proteins which are toxic to animal cells. They seem to exert their toxic effect at the level of the cell membrane. Their precise function is not known. The chain is Thionin-2.1 (THI2.1) from Arabidopsis thaliana (Mouse-ear cress).